We begin with the raw amino-acid sequence, 485 residues long: uncharacterized protein (485 aa).

Residues 151–201 (IKAPTNNSQSGDGNGGTNNDNLLGTFDIREKSNGKKGESNGKQGNGQDKKT) form a disordered region. Residues 155-174 (TNNSQSGDGNGGTNNDNLLG) show a composition bias toward low complexity. A compositionally biased stretch (basic and acidic residues) spans 177–189 (DIREKSNGKKGES).

It belongs to the MG185/MG260 family.

This is an uncharacterized protein from Mycoplasma pneumoniae (strain ATCC 29342 / M129 / Subtype 1) (Mycoplasmoides pneumoniae).